A 400-amino-acid polypeptide reads, in one-letter code: Deoxyguanosinetriphosphate triphosphohydrolase-like protein (400 aa).

An HD domain is found at 73 to 215 (RLTHSIEVSQ…AAIADDIAYN (143 aa)).

This sequence belongs to the dGTPase family. Type 2 subfamily.

The chain is Deoxyguanosinetriphosphate triphosphohydrolase-like protein from Bartonella henselae (strain ATCC 49882 / DSM 28221 / CCUG 30454 / Houston 1) (Rochalimaea henselae).